A 471-amino-acid chain; its full sequence is Ribulose bisphosphate carboxylase large chain (471 aa).

K5 is subject to N6,N6,N6-trimethyllysine. Substrate contacts are provided by N114 and T164. K166 (proton acceptor) is an active-site residue. K168 lines the substrate pocket. Residues K192, D194, and E195 each coordinate Mg(2+). The residue at position 192 (K192) is an N6-carboxylysine. H285 (proton acceptor) is an active-site residue. Positions 286, 318, and 370 each coordinate substrate.

The protein belongs to the RuBisCO large chain family. Type I subfamily. In terms of assembly, heterohexadecamer of 8 large chains and 8 small chains; disulfide-linked. The disulfide link is formed within the large subunit homodimers. Mg(2+) serves as cofactor. In terms of processing, the disulfide bond which can form in the large chain dimeric partners within the hexadecamer appears to be associated with oxidative stress and protein turnover.

The protein resides in the plastid. It localises to the chloroplast. The enzyme catalyses 2 (2R)-3-phosphoglycerate + 2 H(+) = D-ribulose 1,5-bisphosphate + CO2 + H2O. It carries out the reaction D-ribulose 1,5-bisphosphate + O2 = 2-phosphoglycolate + (2R)-3-phosphoglycerate + 2 H(+). Its function is as follows. RuBisCO catalyzes two reactions: the carboxylation of D-ribulose 1,5-bisphosphate, the primary event in carbon dioxide fixation, as well as the oxidative fragmentation of the pentose substrate in the photorespiration process. Both reactions occur simultaneously and in competition at the same active site. This Anthocleista grandiflora (Forest fever tree) protein is Ribulose bisphosphate carboxylase large chain.